The primary structure comprises 274 residues: Chromatin modification-related protein YNG2 (274 aa).

Positions E121–D194 are disordered. The segment covering T166–D180 has biased composition (basic and acidic residues). The PHD-type zinc finger occupies N215–E264. Zn(2+)-binding residues include C218, C220, C231, C236, H242, C245, C258, and C261.

Belongs to the ING family. As to quaternary structure, interacts with H3K4me3 and to a lesser extent with H3K4me2. Component of the NuA4 histone acetyltransferase complex.

It is found in the nucleus. Component of the NuA4 histone acetyltransferase complex which is involved in transcriptional activation of selected genes principally by acetylation of nucleosomal histone H4 and H2A. The NuA4 complex is also involved in DNA repair. Involved in cell cycle progression and meiosis. This Candida glabrata (strain ATCC 2001 / BCRC 20586 / JCM 3761 / NBRC 0622 / NRRL Y-65 / CBS 138) (Yeast) protein is Chromatin modification-related protein YNG2 (YNG2).